The sequence spans 227 residues: PKHD-type hydroxylase Reut_B4660 (227 aa).

Residues 78-178 enclose the Fe2OG dioxygenase domain; sequence KVFPPLFNRY…RVSSFFWIQS (101 aa). Positions 96, 98, and 159 each coordinate Fe cation. Arginine 169 is a 2-oxoglutarate binding site.

Fe(2+) serves as cofactor. Requires L-ascorbate as cofactor.

The protein is PKHD-type hydroxylase Reut_B4660 of Cupriavidus pinatubonensis (strain JMP 134 / LMG 1197) (Cupriavidus necator (strain JMP 134)).